Here is a 249-residue protein sequence, read N- to C-terminus: uncharacterized protein (249 aa).

An S4 RNA-binding domain is found at 4–71 (VRINKFLSEA…RKRYIILNKP (68 aa)). The active-site Nucleophile is D106.

Belongs to the pseudouridine synthase RsuA family.

The enzyme catalyses a uridine in RNA = a pseudouridine in RNA. This is an uncharacterized protein from Aquifex aeolicus (strain VF5).